A 321-amino-acid chain; its full sequence is Beta-ketoacyl-[acyl-carrier-protein] synthase III (321 aa).

Catalysis depends on residues C115 and H248. The tract at residues 249–253 is ACP-binding; that stretch reads QANIR. Residue N278 is part of the active site.

The protein belongs to the thiolase-like superfamily. FabH family. In terms of assembly, homodimer.

It localises to the cytoplasm. The catalysed reaction is malonyl-[ACP] + acetyl-CoA + H(+) = 3-oxobutanoyl-[ACP] + CO2 + CoA. It participates in lipid metabolism; fatty acid biosynthesis. In terms of biological role, catalyzes the condensation reaction of fatty acid synthesis by the addition to an acyl acceptor of two carbons from malonyl-ACP. Catalyzes the first condensation reaction which initiates fatty acid synthesis and may therefore play a role in governing the total rate of fatty acid production. Possesses both acetoacetyl-ACP synthase and acetyl transacylase activities. Its substrate specificity determines the biosynthesis of branched-chain and/or straight-chain of fatty acids. The sequence is that of Beta-ketoacyl-[acyl-carrier-protein] synthase III from Aromatoleum aromaticum (strain DSM 19018 / LMG 30748 / EbN1) (Azoarcus sp. (strain EbN1)).